Here is a 197-residue protein sequence, read N- to C-terminus: Dephospho-CoA kinase (197 aa).

The region spanning 4–197 (RLGLTGSIGM…RQIRAGNIHA (194 aa)) is the DPCK domain. 12–17 (GMGKST) serves as a coordination point for ATP.

Belongs to the CoaE family.

It is found in the cytoplasm. The enzyme catalyses 3'-dephospho-CoA + ATP = ADP + CoA + H(+). It functions in the pathway cofactor biosynthesis; coenzyme A biosynthesis; CoA from (R)-pantothenate: step 5/5. Its function is as follows. Catalyzes the phosphorylation of the 3'-hydroxyl group of dephosphocoenzyme A to form coenzyme A. This Ruegeria pomeroyi (strain ATCC 700808 / DSM 15171 / DSS-3) (Silicibacter pomeroyi) protein is Dephospho-CoA kinase.